Reading from the N-terminus, the 622-residue chain is Chaperone protein HscA homolog (622 aa).

It belongs to the heat shock protein 70 family.

Functionally, chaperone involved in the maturation of iron-sulfur cluster-containing proteins. Has a low intrinsic ATPase activity which is markedly stimulated by HscB. The polypeptide is Chaperone protein HscA homolog (Aromatoleum aromaticum (strain DSM 19018 / LMG 30748 / EbN1) (Azoarcus sp. (strain EbN1))).